The following is a 201-amino-acid chain: Probable calcium-binding protein CML15 (201 aa).

The disordered stretch occupies residues 1–55; the sequence is MGKVRAFFSRKGRGNSSGRSRSMREAAMNVDWSPRPSDLAAAAAAKPRPPAAEDE. EF-hand domains are found at residues 51-86, 87-122, 125-160, and 161-196; these read AAED…VGHA, VTDD…PPGD, AAEE…IGEA, and ATVA…GAGF. Positions 64, 66, 68, 70, 75, 100, 102, 104, 106, 111, 138, 140, 142, 149, 174, 176, 178, and 185 each coordinate Ca(2+).

Functionally, potential calcium sensor. The polypeptide is Probable calcium-binding protein CML15 (CML15) (Oryza sativa subsp. japonica (Rice)).